Reading from the N-terminus, the 312-residue chain is DNA primase small subunit PriS (312 aa).

Active-site residues include Asp88, Asp90, and Asp215.

It belongs to the eukaryotic-type primase small subunit family. As to quaternary structure, heterodimer of a small subunit (PriS) and a large subunit (PriL). Mg(2+) is required as a cofactor. It depends on Mn(2+) as a cofactor.

Catalytic subunit of DNA primase, an RNA polymerase that catalyzes the synthesis of short RNA molecules used as primers for DNA polymerase during DNA replication. The small subunit contains the primase catalytic core and has DNA synthesis activity on its own. Binding to the large subunit stabilizes and modulates the activity, increasing the rate of DNA synthesis while decreasing the length of the DNA fragments, and conferring RNA synthesis capability. The DNA polymerase activity may enable DNA primase to also catalyze primer extension after primer synthesis. May also play a role in DNA repair. This is DNA primase small subunit PriS from Pyrobaculum aerophilum (strain ATCC 51768 / DSM 7523 / JCM 9630 / CIP 104966 / NBRC 100827 / IM2).